Reading from the N-terminus, the 280-residue chain is 4-diphosphocytidyl-2-C-methyl-D-erythritol kinase (280 aa).

Lys-8 is a catalytic residue. Residue 91-101 (PVSAGLAGGST) participates in ATP binding. Asp-133 is a catalytic residue.

The protein belongs to the GHMP kinase family. IspE subfamily.

It catalyses the reaction 4-CDP-2-C-methyl-D-erythritol + ATP = 4-CDP-2-C-methyl-D-erythritol 2-phosphate + ADP + H(+). It functions in the pathway isoprenoid biosynthesis; isopentenyl diphosphate biosynthesis via DXP pathway; isopentenyl diphosphate from 1-deoxy-D-xylulose 5-phosphate: step 3/6. Functionally, catalyzes the phosphorylation of the position 2 hydroxy group of 4-diphosphocytidyl-2C-methyl-D-erythritol. This Clostridium beijerinckii (strain ATCC 51743 / NCIMB 8052) (Clostridium acetobutylicum) protein is 4-diphosphocytidyl-2-C-methyl-D-erythritol kinase.